A 160-amino-acid polypeptide reads, in one-letter code: Large ribosomal subunit protein eL21B (160 aa).

Lysine 32 is covalently cross-linked (Glycyl lysine isopeptide (Lys-Gly) (interchain with G-Cter in ubiquitin)).

The protein belongs to the eukaryotic ribosomal protein eL21 family. As to quaternary structure, component of the large ribosomal subunit (LSU). Mature yeast ribosomes consist of a small (40S) and a large (60S) subunit. The 40S small subunit contains 1 molecule of ribosomal RNA (18S rRNA) and 33 different proteins (encoded by 57 genes). The large 60S subunit contains 3 rRNA molecules (25S, 5.8S and 5S rRNA) and 46 different proteins (encoded by 81 genes).

The protein resides in the cytoplasm. Its function is as follows. Component of the ribosome, a large ribonucleoprotein complex responsible for the synthesis of proteins in the cell. The small ribosomal subunit (SSU) binds messenger RNAs (mRNAs) and translates the encoded message by selecting cognate aminoacyl-transfer RNA (tRNA) molecules. The large subunit (LSU) contains the ribosomal catalytic site termed the peptidyl transferase center (PTC), which catalyzes the formation of peptide bonds, thereby polymerizing the amino acids delivered by tRNAs into a polypeptide chain. The nascent polypeptides leave the ribosome through a tunnel in the LSU and interact with protein factors that function in enzymatic processing, targeting, and the membrane insertion of nascent chains at the exit of the ribosomal tunnel. The chain is Large ribosomal subunit protein eL21B from Saccharomyces cerevisiae (strain ATCC 204508 / S288c) (Baker's yeast).